A 123-amino-acid chain; its full sequence is Large ribosomal subunit protein uL18 (123 aa).

Belongs to the universal ribosomal protein uL18 family. Part of the 50S ribosomal subunit; part of the 5S rRNA/L5/L18/L25 subcomplex. Contacts the 5S and 23S rRNAs.

Functionally, this is one of the proteins that bind and probably mediate the attachment of the 5S RNA into the large ribosomal subunit, where it forms part of the central protuberance. In Wolbachia sp. subsp. Brugia malayi (strain TRS), this protein is Large ribosomal subunit protein uL18.